Here is a 428-residue protein sequence, read N- to C-terminus: MSAFIVLGAQWGDEGKGKMTDYLAEEAEVVVRFQGGNNAGHTVEVGDKQYKLHLIPSGILYDDKLNVIGNGVVVDPKALFEEINYLEGVGVKVTPEKLIISDRAQLIMPYHKTLDVLKEKARGKNDIGTTGKGIGPCYTDKFERCGIRVCDLMHEDVFKEKLEENIRMKNEYITKVLGGEPLSFSEILNEYLEFAKKLRPFVQDTSVKVYDNIKENKTVLFEGAQGMLLDIDYGTYPYVTSSNTTAGGVCSGIGVGPNMVTNAVGITKAYTTRVGKGPFPTELIDETGDWIREKGHEYGVTTGRSRRCGWLDLVIVKTAARVSGLTSLAVTKIDTLAGLEKLKVCVGYKFDGKVIDYFPASLEDLAKCEPVYEDFDGWDDSVAEARTYEELPENAKKYLNRIAEFTDTKISIIGVGPKREQTIRIDSI.

GTP is bound by residues 12–18 (GDEGKGK) and 40–42 (GHT). The active-site Proton acceptor is Asp-13. Residues Asp-13 and Gly-40 each contribute to the Mg(2+) site. Residues 13–16 (DEGK), 38–41 (NAGH), Thr-130, Arg-144, Gln-225, Thr-240, and Arg-304 contribute to the IMP site. The active-site Proton donor is the His-41. Position 300 to 306 (300 to 306 (VTTGRSR)) interacts with substrate. GTP is bound by residues Arg-306, 332–334 (KID), and 414–416 (GVG).

This sequence belongs to the adenylosuccinate synthetase family. In terms of assembly, homodimer. Requires Mg(2+) as cofactor.

The protein resides in the cytoplasm. The catalysed reaction is IMP + L-aspartate + GTP = N(6)-(1,2-dicarboxyethyl)-AMP + GDP + phosphate + 2 H(+). Its pathway is purine metabolism; AMP biosynthesis via de novo pathway; AMP from IMP: step 1/2. In terms of biological role, plays an important role in the de novo pathway of purine nucleotide biosynthesis. Catalyzes the first committed step in the biosynthesis of AMP from IMP. This chain is Adenylosuccinate synthetase, found in Clostridium botulinum (strain Alaska E43 / Type E3).